The following is a 95-amino-acid chain: Aspartyl/glutamyl-tRNA(Asn/Gln) amidotransferase subunit C (95 aa).

This sequence belongs to the GatC family. As to quaternary structure, heterotrimer of A, B and C subunits.

It catalyses the reaction L-glutamyl-tRNA(Gln) + L-glutamine + ATP + H2O = L-glutaminyl-tRNA(Gln) + L-glutamate + ADP + phosphate + H(+). It carries out the reaction L-aspartyl-tRNA(Asn) + L-glutamine + ATP + H2O = L-asparaginyl-tRNA(Asn) + L-glutamate + ADP + phosphate + 2 H(+). Its function is as follows. Allows the formation of correctly charged Asn-tRNA(Asn) or Gln-tRNA(Gln) through the transamidation of misacylated Asp-tRNA(Asn) or Glu-tRNA(Gln) in organisms which lack either or both of asparaginyl-tRNA or glutaminyl-tRNA synthetases. The reaction takes place in the presence of glutamine and ATP through an activated phospho-Asp-tRNA(Asn) or phospho-Glu-tRNA(Gln). The chain is Aspartyl/glutamyl-tRNA(Asn/Gln) amidotransferase subunit C from Thermoanaerobacter pseudethanolicus (strain ATCC 33223 / 39E) (Clostridium thermohydrosulfuricum).